Consider the following 114-residue polypeptide: Procyclic form-specific polypeptide A-alpha (114 aa).

A signal peptide spans Met-1 to Ala-27. The tract at residues Ser-33 to Thr-95 is disordered. Acidic residues predominate over residues Asp-47–Pro-89. 7 consecutive repeat copies span residues Gly-48–Pro-52, Gly-56–Thr-60, Gly-61–Thr-65, Gly-66–Thr-70, Gly-71–Thr-75, Gly-76–Thr-80, and Gly-81–Thr-85. Residues Gly-48–Thr-85 form a 7 X 5 AA tandem repeats of G-P-E-E-[PT] region. Gly-92 is lipidated: GPI-anchor amidated glycine. Residues Ala-93 to Phe-114 constitute a propeptide that is removed on maturation.

It localises to the cell membrane. Major surface antigen of procyclic forms. In Trypanosoma brucei brucei, this protein is Procyclic form-specific polypeptide A-alpha (PARPA-ALPHA).